The sequence spans 138 residues: MILQQPLQRGPQGGAQRLPRAALGVTWGLDASSPLRGAVPMSTKRRLEEEQEPLRKQFLSEENMATHFSQLSLHNDHPYCSPPMTFSPALPPLRSPCSELLLWRYPGSLIPEALRLLRLGDTPSPPYPATPAGDIMEL.

Residues 76 to 79 (DHPY) form an interaction with HCFC1 region. The short motif at 110-119 (IPEALRLLRL) is the Nuclear export signal element.

Interacts with HCFC1. In terms of tissue distribution, widely expressed.

It localises to the cytoplasm. It is found in the nucleus. Functionally, regulates HCFC1 activity by modulating its subcellular localization. Overexpression of HCFC1R1 leads to accumulation of HCFC1 in the cytoplasm. HCFC1R1-mediated export may provide the pool of cytoplasmic HCFC1 required for import of virion-derived VP16 into the nucleus. The polypeptide is Host cell factor C1 regulator 1 (HCFC1R1) (Homo sapiens (Human)).